The following is a 329-amino-acid chain: DNA-directed RNA polymerase subunit alpha (329 aa).

Residues 1–235 (MQGSVTEFLK…EQLEAFVDLR (235 aa)) form an alpha N-terminal domain (alpha-NTD) region. Residues 249 to 329 (FDPILLRPVD…NWPPASIADE (81 aa)) form an alpha C-terminal domain (alpha-CTD) region.

Belongs to the RNA polymerase alpha chain family. Homodimer. The RNAP catalytic core consists of 2 alpha, 1 beta, 1 beta' and 1 omega subunit. When a sigma factor is associated with the core the holoenzyme is formed, which can initiate transcription.

The enzyme catalyses RNA(n) + a ribonucleoside 5'-triphosphate = RNA(n+1) + diphosphate. Its function is as follows. DNA-dependent RNA polymerase catalyzes the transcription of DNA into RNA using the four ribonucleoside triphosphates as substrates. The protein is DNA-directed RNA polymerase subunit alpha of Cronobacter sakazakii (strain ATCC BAA-894) (Enterobacter sakazakii).